Consider the following 640-residue polypeptide: Threonine--tRNA ligase (640 aa).

In terms of domain architecture, TGS spans 1–61 (MPVITLPDGS…SNDATLQIIT (61 aa)). The interval 242 to 533 (DHRKIGKQLD…LIEHYAGVFP (292 aa)) is catalytic. The Zn(2+) site is built by Cys-333, His-384, and His-510.

Belongs to the class-II aminoacyl-tRNA synthetase family. In terms of assembly, homodimer. Zn(2+) serves as cofactor.

It is found in the cytoplasm. The catalysed reaction is tRNA(Thr) + L-threonine + ATP = L-threonyl-tRNA(Thr) + AMP + diphosphate + H(+). Catalyzes the attachment of threonine to tRNA(Thr) in a two-step reaction: L-threonine is first activated by ATP to form Thr-AMP and then transferred to the acceptor end of tRNA(Thr). Also edits incorrectly charged L-seryl-tRNA(Thr). This chain is Threonine--tRNA ligase, found in Pseudomonas putida (strain ATCC 47054 / DSM 6125 / CFBP 8728 / NCIMB 11950 / KT2440).